The sequence spans 62 residues: Photosystem II reaction center protein Z (62 aa).

Transmembrane regions (helical) follow at residues 8-28 (ALIG…VAYA) and 41-61 (WVGS…NFFV).

It belongs to the PsbZ family. In terms of assembly, PSII is composed of 1 copy each of membrane proteins PsbA, PsbB, PsbC, PsbD, PsbE, PsbF, PsbH, PsbI, PsbJ, PsbK, PsbL, PsbM, PsbT, PsbX, PsbY, PsbZ, Psb30/Ycf12, peripheral proteins PsbO, CyanoQ (PsbQ), PsbU, PsbV and a large number of cofactors. It forms dimeric complexes.

It is found in the cellular thylakoid membrane. May control the interaction of photosystem II (PSII) cores with the light-harvesting antenna, regulates electron flow through the 2 photosystem reaction centers. PSII is a light-driven water plastoquinone oxidoreductase, using light energy to abstract electrons from H(2)O, generating a proton gradient subsequently used for ATP formation. This chain is Photosystem II reaction center protein Z, found in Nostoc punctiforme (strain ATCC 29133 / PCC 73102).